The sequence spans 436 residues: Xylose isomerase (436 aa).

Asp-306 and Asp-308 together coordinate Mg(2+).

It belongs to the xylose isomerase family. Homotetramer. It depends on Mg(2+) as a cofactor.

It is found in the cytoplasm. It carries out the reaction alpha-D-xylose = alpha-D-xylulofuranose. In Sinorhizobium fredii (strain NBRC 101917 / NGR234), this protein is Xylose isomerase.